A 1033-amino-acid polypeptide reads, in one-letter code: DNA polymerase I A, chloroplastic (1033 aa).

Over residues 1 to 11 the composition is skewed to pro residues; the sequence is MAVAPPLPPAP. 2 disordered regions span residues 1-32 and 104-142; these read MAVA…LSSP and TNGT…PSNS. A chloroplast-targeting transit peptide spans 1-55; sequence MAVAPPLPPAPARQLRRWKGSSPRPPPWLSSPFRRTRYLSRPAFAAGGRQDYSPS. Residues 115–124 show a composition bias toward basic and acidic residues; the sequence is LRHDPSEDIR. A compositionally biased stretch (polar residues) spans 125 to 142; the sequence is SSNYPSLYNQRERGPSNS. Residues 321–482 form the 3'-5' exonuclease domain; that stretch reads FGNGKTCIWV…LYESLKNKLE (162 aa). Residues 696 to 1030 are polymerase; it reads CHAIAALCEV…VDAKYAKSWY (335 aa).

Belongs to the DNA polymerase type-A family. In terms of tissue distribution, expressed in shoot apical meristem, root apical meristem, leaf primordia and the marginal meristem.

The protein localises to the plastid. It is found in the chloroplast. It carries out the reaction DNA(n) + a 2'-deoxyribonucleoside 5'-triphosphate = DNA(n+1) + diphosphate. With respect to regulation, inhibited by dideoxythymidine-triphosphate (ddTTP), but not by aphidicolin and N-ethylmaleimide. Its function is as follows. In addition to polymerase activity, this DNA polymerase exhibits 5'-3' exonuclease activity. May be required for DNA replication and accumulation in plastids. The protein is DNA polymerase I A, chloroplastic of Oryza sativa subsp. japonica (Rice).